The primary structure comprises 432 residues: Sphingosine N-acyltransferase-like protein ALT7 (432 aa).

A helical transmembrane segment spans residues 55 to 75 (IGLSLGSLLLLILMFTCLPYY). Asn-77 carries N-linked (GlcNAc...) asparagine glycosylation. The next 7 helical transmembrane spans lie at 91–111 (FIFS…IYLL), 128–148 (FTEQ…GMYI), 172–192 (GLTK…IVVV), 226–246 (VGNV…FAKL), 250–270 (LGFQ…WLVA), 273–293 (GLYL…MPYG), and 338–358 (AFLG…GMIL). Residues 123 to 366 (KLMVRFTEQG…ILKVAYKVFQ (244 aa)) enclose the TLC domain. The tract at residues 370 to 395 (ADDTRSDSEESGYGTSDHEGDCYGAQ) is disordered.

The protein belongs to the sphingosine N-acyltransferase family.

It is found in the membrane. The protein operates within mycotoxin biosynthesis. Sphingosine N-acyltransferase-like protein; part of the gene cluster that mediates the biosynthesis of the host-selective toxins (HSTs) AAL-toxins, sphinganine-analog mycotoxins responsible for Alternaria stem canker on tomato by the tomato pathotype. The biosynthesis starts with the polyketide synthase ALT1-catalyzed C-16 carbon chain assembly from one starter acetyl-CoA unit with malonyl-CoA extender units. ALT1 also selectively transfers methyl groups at the first and the third cycle of chain elongation for AAL toxin. The C-16 polyketide chain is released from the enzyme by a nucleophilic attack of a carbanion, which is derived from R-carbon of glycin by decarboxylation, on the carbonyl carbon of polyketide acyl chain. This step is probably catalyzed by a pyridoxal 5'-phosphate-dependent aminoacyl transferase ALT4. The respective functions of the other enzymes encoded by the cluster have still to be elucidated. The sphingosine N-acyltransferase-like protein ALT7 seems not to act as a resistance/self-tolerance factor against the toxin in the toxin biosynthetic gene cluster, contrary to what is expected. This is Sphingosine N-acyltransferase-like protein ALT7 from Alternaria alternata (Alternaria rot fungus).